The primary structure comprises 238 residues: Large ribosomal subunit protein uL1 (238 aa).

Belongs to the universal ribosomal protein uL1 family. In terms of assembly, part of the 50S ribosomal subunit.

Its function is as follows. Binds directly to 23S rRNA. The L1 stalk is quite mobile in the ribosome, and is involved in E site tRNA release. Functionally, protein L1 is also a translational repressor protein, it controls the translation of the L11 operon by binding to its mRNA. In Rickettsia prowazekii (strain Madrid E), this protein is Large ribosomal subunit protein uL1.